The following is a 179-amino-acid chain: Fas apoptotic inhibitory molecule 1 (179 aa).

N-acetylthreonine is present on threonine 2.

This sequence belongs to the FAIM1 family. In terms of tissue distribution, widely expressed, with the highest levels in brain, thymus, kidney, and spleen.

It is found in the cytoplasm. Its function is as follows. Plays a role as an inducible effector molecule that mediates Fas resistance produced by surface Ig engagement in B cells. This Mus musculus (Mouse) protein is Fas apoptotic inhibitory molecule 1 (Faim).